The sequence spans 431 residues: MKQMIIHGGKPLQGDVWIGGAKNSTVALIPASILSRTPVVLEGVPRIADVINLMDLLDEMDVRCEFKETTLRIDPTDIKMSPLPAGKIKSLRASYYFMGALLGRFGKAVVGFPGGDDIGPRPIDQHIKGFEALGASVKNENDQIIITAPEDGLHGAKIHLKMPSVGATMNIIMASVTAQGQTIIENAAKEPEIIDLATFLNNMGAVIRGAGTDVIRIEGVEMLKAQIPHTIIPDRIEAGTYVSLAACIGNGIRIHNIIEEHLDSYLAKVEEMGVVIDADEDSLYVYPAGDLKMVQVKTDVYPGFATDLQQPITPLLLTAKSGEGVVIDNIYPQRIGHIAQLQKMGANIKVADNIILAHPTEQLHGAEVIAGEIRAGACLMIAGLMAHGTTVIDKAGNILRGYDRIQEKLRQLGADVTIKDNPDVPGILDNI.

22-23 contributes to the phosphoenolpyruvate binding site; it reads KN. UDP-N-acetyl-alpha-D-glucosamine is bound at residue Arg92. The active-site Proton donor is the Asp116. UDP-N-acetyl-alpha-D-glucosamine contacts are provided by residues 121 to 125, Asp307, and Ile330; that span reads RPIDQ.

This sequence belongs to the EPSP synthase family. MurA subfamily.

It is found in the cytoplasm. It carries out the reaction phosphoenolpyruvate + UDP-N-acetyl-alpha-D-glucosamine = UDP-N-acetyl-3-O-(1-carboxyvinyl)-alpha-D-glucosamine + phosphate. It participates in cell wall biogenesis; peptidoglycan biosynthesis. Functionally, cell wall formation. Adds enolpyruvyl to UDP-N-acetylglucosamine. The sequence is that of UDP-N-acetylglucosamine 1-carboxyvinyltransferase from Lactobacillus acidophilus (strain ATCC 700396 / NCK56 / N2 / NCFM).